The sequence spans 558 residues: Glucose-6-phosphate isomerase (558 aa).

A2 is subject to N-acetylalanine. Position 12 is an N6-acetyllysine (K12). An N6-(2-hydroxyisobutyryl)lysine modification is found at K34. Phosphoserine is present on S107. Phosphothreonine is present on T109. K142 carries the N6-acetyllysine modification. Position 159–160 (159–160 (GS)) interacts with D-glucose 6-phosphate. Residue S185 is modified to Phosphoserine; by CK2. 210–215 (SKTFTT) is a binding site for D-glucose 6-phosphate. The residue at position 250 (T250) is a Phosphothreonine. Q354, E358, and H389 together coordinate D-glucose 6-phosphate. Residue E358 is the Proton donor of the active site. H389 is an active-site residue. Residue K454 is modified to N6-acetyllysine; alternate. K454 bears the N6-malonyllysine; alternate mark. An N6-succinyllysine; alternate modification is found at K454. At S455 the chain carries Phosphoserine. A D-glucose 6-phosphate-binding site is contributed by K519. Residue K519 is part of the active site.

It belongs to the GPI family. In terms of assembly, homodimer in the catalytically active form, monomer in the secreted form. Post-translationally, phosphorylation at Ser-185 by CK2 has been shown to decrease enzymatic activity and may contribute to secretion by a non-classical secretory pathway. In terms of processing, ISGylated.

Its subcellular location is the cytoplasm. The protein resides in the secreted. It carries out the reaction alpha-D-glucose 6-phosphate = beta-D-fructose 6-phosphate. Its pathway is carbohydrate degradation; glycolysis; D-glyceraldehyde 3-phosphate and glycerone phosphate from D-glucose: step 2/4. In terms of biological role, in the cytoplasm, catalyzes the conversion of glucose-6-phosphate to fructose-6-phosphate, the second step in glycolysis, and the reverse reaction during gluconeogenesis. Besides it's role as a glycolytic enzyme, also acts as a secreted cytokine: acts as an angiogenic factor (AMF) that stimulates endothelial cell motility. Acts as a neurotrophic factor, neuroleukin, for spinal and sensory neurons. It is secreted by lectin-stimulated T-cells and induces immunoglobulin secretion. The sequence is that of Glucose-6-phosphate isomerase from Sus scrofa (Pig).